Reading from the N-terminus, the 57-residue chain is Large ribosomal subunit protein bL32 (57 aa).

Residues 1–19 are compositionally biased toward basic residues; it reads MAVPKRRMSRANTRSRRAQ. The disordered stretch occupies residues 1-20; the sequence is MAVPKRRMSRANTRSRRAQW.

The protein belongs to the bacterial ribosomal protein bL32 family.

This is Large ribosomal subunit protein bL32 from Mycobacterium avium (strain 104).